The following is a 167-amino-acid chain: Shikimate kinase (167 aa).

Residue 12-17 (GSGKTT) participates in ATP binding. Thr16 contributes to the Mg(2+) binding site. 3 residues coordinate substrate: Asp34, Arg58, and Gly80. Arg117 provides a ligand contact to ATP. Position 135 (Arg135) interacts with substrate. Arg152 provides a ligand contact to ATP.

It belongs to the shikimate kinase family. In terms of assembly, monomer. Mg(2+) serves as cofactor.

It is found in the cytoplasm. It catalyses the reaction shikimate + ATP = 3-phosphoshikimate + ADP + H(+). It participates in metabolic intermediate biosynthesis; chorismate biosynthesis; chorismate from D-erythrose 4-phosphate and phosphoenolpyruvate: step 5/7. Functionally, catalyzes the specific phosphorylation of the 3-hydroxyl group of shikimic acid using ATP as a cosubstrate. This chain is Shikimate kinase, found in Salinispora tropica (strain ATCC BAA-916 / DSM 44818 / JCM 13857 / NBRC 105044 / CNB-440).